The primary structure comprises 570 residues: NADPH oxidase 2 (570 aa).

The Cytoplasmic portion of the chain corresponds to 2–9 (GNWVVNEG). Residues 10-36 (ISIFVILVWLGMNVFLFVWYYRVYDIP) form a helical membrane-spanning segment. The Extracellular segment spans residues 37 to 46 (DKFFYTRKLL). A helical membrane pass occupies residues 47–72 (GSALALARAPAACLNFNCMLILLPVC). A Ferric oxidoreductase domain is found at 54–286 (RAPAACLNFN…MFLYLCERLV (233 aa)). The Cytoplasmic segment spans residues 73 to 95 (RNLLSFLRGSSACCSTRIRRQLD). A helical transmembrane segment spans residues 96–130 (RNLTFHKMVAWMIALHTAIHTIAHLFNVEWCVNAR). 2 residues coordinate heme b: His101 and His115. Residues 131 to 163 (VNNSDPYSIALSDIGDKPNETYLNFVRQRIKNP) are Extracellular-facing. 2 N-linked (GlcNAc...) asparagine glycosylation sites follow: Asn132 and Asn149. A Glycyl lysine isopeptide (Lys-Gly) (interchain with G-Cter in ubiquitin) cross-link involves residue Lys161. A helical membrane pass occupies residues 164–194 (EGGLYVAVTRLAGITGVVITLCLILIITSST). The Cytoplasmic portion of the chain corresponds to 195–203 (KTIRRSYFE). FAD is bound by residues Arg199 and Ser200. Residues 204–222 (VFWYTHHLFVIFFIGLAIH) traverse the membrane as a helical segment. Heme b is bound by residues Trp206, His209, His222, Arg226, and Ile227. Residues 223-267 (GAQRIVRGQTAESLLKHQPRNCYQNISQWGKIENCPIPEFSGNPP) are Extracellular-facing. Asn247 is a glycosylation site (N-linked (GlcNAc...) asparagine). Heme b is bound by residues Met268, Tyr280, and Arg287. Residues 268–285 (MTWKWIVGPMFLYLCERL) traverse the membrane as a helical segment. The Cytoplasmic portion of the chain corresponds to 286-570 (VRFWRSQQKV…VHFIFNKENF (285 aa)). In terms of domain architecture, FAD-binding FR-type spans 287-397 (RFWRSQQKVV…DGPFGTASED (111 aa)). Glycyl lysine isopeptide (Lys-Gly) (interchain with G-Cter in ubiquitin) cross-links involve residues Lys294, Lys299, Lys306, Lys328, and Lys334. 8 residues coordinate FAD: Trp337, His338, Pro339, Thr341, His354, Arg356, Trp361, and Thr362. A Glycyl lysine isopeptide (Lys-Gly) (interchain with G-Cter in ubiquitin) cross-link involves residue Lys381. 3 residues coordinate NADPH: Ile411, Arg446, and Thr481. Residue Lys506 forms a Glycyl lysine isopeptide (Lys-Gly) (interchain with G-Cter in ubiquitin) linkage. Position 513 (Arg513) interacts with NADPH. Residue Lys567 forms a Glycyl lysine isopeptide (Lys-Gly) (interchain with G-Cter in ubiquitin) linkage.

In terms of assembly, component of the phagocyte NADPH oxidase core complex/cytochrome b558 complex, composed of CYBB (heavy chain (beta)) and CYBA (light chain (alpha)). Component of the phagocyte NADPH oxidase complex composed of an obligatory core heterodimer formed by the membrane proteins CYBA and CYBB and the cytosolic regulatory subunits NCF1/p47-phox, NCF2/p67-phox, NCF4/p40-phox and the small GTPase RAC1 or RAC2. Interacts with NCF1 (phosphorylated form). Interacts with NCF2; the interaction is enhanced in the presence of GBP7. Interacts with RAC2. Interacts with RAC1. Interacts with calprotectin (S100A8/9). Interacts with NRROS; the interaction is direct and impairs formation of a stable NADPH oxidase complex. Interacts with CYBC1; CYBC1 may act as a chaperone stabilizing Cytochrome b-245 heterodimer. The CYBA-CYBB complex interacts with GBP7. The cofactor is FAD. Glycosylated. In terms of processing, phosphorylated on Ser and Thr residues by PKC during neutrophils activation. Phosphorylation enhances the NADPH oxidase activity and stimulates its interaction with RAC2, NCF2/p67-phox, and NCF1/p47-phox. Post-translationally, undergoes 'Lys-48'-linked polyubiquitination, likely by RNF145, triggering endoplasmic reticulum-associated degradation.

It is found in the cell membrane. The catalysed reaction is NADPH + 2 O2 = 2 superoxide + NADP(+) + H(+). Catalytic subunit of the phagocyte NADPH oxidase complex that mediates the transfer of electrons from cytosolic NADPH to O2 to produce the superoxide anion (O2(-)). In the activated complex, electrons are first transferred from NADPH to flavin adenine dinucleotide (FAD) and subsequently transferred via two heme molecules to molecular oxygen, producing superoxide through an outer-sphere reaction. Activation of the NADPH oxidase complex is initiated by the assembly of cytosolic subunits of the NADPH oxidase complex with the core NADPH oxidase complex to form a complex at the plasma membrane or phagosomal membrane. This activation process is initiated by phosphorylation dependent binding of the cytosolic NCF1/p47-phox subunit to the C-terminus of CYBA/p22-phox. NADPH oxidase complex assembly is impaired through interaction with NRROS. The polypeptide is NADPH oxidase 2 (Bos taurus (Bovine)).